We begin with the raw amino-acid sequence, 261 residues long: UPF0328 protein ECU06_0100 (261 aa).

The protein belongs to the UPF0328 family.

This chain is UPF0328 protein ECU06_0100, found in Encephalitozoon cuniculi (strain GB-M1) (Microsporidian parasite).